Here is a 214-residue protein sequence, read N- to C-terminus: GTP cyclohydrolase 1 (214 aa).

C108, H111, and C179 together coordinate Zn(2+).

This sequence belongs to the GTP cyclohydrolase I family. Toroid-shaped homodecamer, composed of two pentamers of five dimers.

It carries out the reaction GTP + H2O = 7,8-dihydroneopterin 3'-triphosphate + formate + H(+). Its pathway is cofactor biosynthesis; 7,8-dihydroneopterin triphosphate biosynthesis; 7,8-dihydroneopterin triphosphate from GTP: step 1/1. The protein is GTP cyclohydrolase 1 of Shewanella putrefaciens (strain CN-32 / ATCC BAA-453).